Here is a 249-residue protein sequence, read N- to C-terminus: MNKFDIENLDLYYGENQALKAINLPIPVRQVTALIGPSGCGKSTLLRCLNRMNDLIEGVKITGKLAMDGEDIYGNVDVADLRIKVGMVFQKPNPFPMSIYENVAYGLRAQGIKDKKHIDEVVERSLRGAALWDEVKDRLKSHAFGLSGGQQQRLCIARTIAMEPDVILMDEPTSALDPIATHKIEELMEELKKNYTIVIVTHSMQQARRISDRTAFFLMGELVEHNDTQVIFSEPSDDRTRGYVNGDFG.

The region spanning F4–V244 is the ABC transporter domain. Position 36 to 43 (G36 to S43) interacts with ATP.

It belongs to the ABC transporter superfamily. Phosphate importer (TC 3.A.1.7) family. The complex is composed of two ATP-binding proteins (PstB), two transmembrane proteins (PstC and PstA) and a solute-binding protein (PstS).

The protein resides in the cell inner membrane. The enzyme catalyses phosphate(out) + ATP + H2O = ADP + 2 phosphate(in) + H(+). Functionally, part of the ABC transporter complex PstSACB involved in phosphate import. Responsible for energy coupling to the transport system. In Vibrio vulnificus (strain CMCP6), this protein is Phosphate import ATP-binding protein PstB 2.